The primary structure comprises 274 residues: NAD-dependent protein deacetylase (274 aa).

The region spanning 1 to 274 (MDSRMSDLQA…CDEVLAEVVP (274 aa)) is the Deacetylase sirtuin-type domain. NAD(+) contacts are provided by residues 26–46 (GAGC…GQWK) and 104–107 (QNVD). His-122 acts as the Proton acceptor in catalysis. Residues Cys-130, Cys-133, Cys-181, and Cys-184 each contribute to the Zn(2+) site. NAD(+)-binding positions include 221–223 (GSS), 247–249 (NLG), and Cys-265.

Belongs to the sirtuin family. Class II subfamily. It depends on Zn(2+) as a cofactor.

Its subcellular location is the cytoplasm. The catalysed reaction is N(6)-acetyl-L-lysyl-[protein] + NAD(+) + H2O = 2''-O-acetyl-ADP-D-ribose + nicotinamide + L-lysyl-[protein]. Functionally, NAD-dependent protein deacetylase which modulates the activities of several enzymes which are inactive in their acetylated form. This is NAD-dependent protein deacetylase from Bordetella pertussis (strain Tohama I / ATCC BAA-589 / NCTC 13251).